We begin with the raw amino-acid sequence, 1129 residues long: Large proline-rich protein bag6 (1129 aa).

Positions 1–76 (MEVTVKTLDS…HLVERAPPQT (76 aa)) constitute a Ubiquitin-like domain. Disordered stretches follow at residues 69-108 (VERAPPQTQPSTGGPSTSSSTSPSSSNAANVPGAGAPERN), 187-235 (QPVN…SPSE), 347-402 (TGNG…HPHP), 490-518 (PAAPSFPPQPGVATTPPGPGGATTAVPGA), 550-606 (GSNT…QHLS), 654-692 (VPVSTSPPQSASQAPPPSSPSPPPAHSSPPPAAAPESLP), 942-967 (VPQAPEASSQDQPMETTPVDCQNGAA), and 987-1009 (VPTICTDSEHPTQEDTGSEQWAA). Positions 73 to 105 (PPQTQPSTGGPSTSSSTSPSSSNAANVPGAGAP) are enriched in low complexity. Composition is skewed to polar residues over residues 209-232 (RETLPQTTQNTDGQSNTAPTSHPS) and 364-383 (HTPTNTSEPQRSNSDNQPPS). 2 stretches are compositionally biased toward low complexity: residues 553-593 (TPSS…SSGP) and 655-666 (PVSTSPPQSASQ). Residues 667 to 686 (APPPSSPSPPPAHSSPPPAA) are compositionally biased toward pro residues. Polar residues predominate over residues 947-956 (EASSQDQPME).

In terms of assembly, component of the bag6/bat3 complex.

It localises to the cytoplasm. The protein localises to the cytosol. The protein resides in the nucleus. Its subcellular location is the secreted. It is found in the extracellular exosome. In terms of biological role, ATP-independent molecular chaperone preventing the aggregation of misfolded and hydrophobic patches-containing proteins. Functions as part of a cytosolic protein quality control complex, the bag6/bat3 complex, which maintains these client proteins in a soluble state and participates in their proper delivery to the endoplasmic reticulum or alternatively can promote their sorting to the proteasome where they undergo degradation. The bag6/bat3 complex is involved in the post-translational delivery of tail-anchored/type II transmembrane proteins to the endoplasmic reticulum membrane. Similarly, the bag6/bat3 complex also functions as a sorting platform for proteins of the secretory pathway that are mislocalized to the cytosol either delivering them to the proteasome for degradation or to the endoplasmic reticulum. The bag6/bat3 complex also plays a role in the endoplasmic reticulum-associated degradation (ERAD), a quality control mechanism that eliminates unwanted proteins of the endoplasmic reticulum through their retrotranslocation to the cytosol and their targeting to the proteasome. It maintains these retrotranslocated proteins in an unfolded yet soluble state condition in the cytosol to ensure their proper delivery to the proteasome. Also required for selective ubiquitin-mediated degradation of defective nascent chain polypeptides by the proteasome. Also involved in endoplasmic reticulum stress-induced pre-emptive quality control, a mechanism that selectively attenuates the translocation of newly synthesized proteins into the endoplasmic reticulum and reroutes them to the cytosol for proteasomal degradation. May ensure the proper degradation of these proteins and thereby protects the endoplasmic reticulum from protein overload upon stress. By stabilizing a large spectrum of proteins, may indirectly affect different biological processes including apoptosis. By controlling the steady-state expression of the IGF1R receptor, indirectly regulates the insulin-like growth factor receptor signaling pathway. Functionally, when nuclear, may also act as a component of some chromatin regulator complex. In Xenopus tropicalis (Western clawed frog), this protein is Large proline-rich protein bag6.